The primary structure comprises 196 residues: ATP-dependent Clp protease proteolytic subunit (196 aa).

The active-site Nucleophile is the S97. H122 is a catalytic residue.

Belongs to the peptidase S14 family. As to quaternary structure, fourteen ClpP subunits assemble into 2 heptameric rings which stack back to back to give a disk-like structure with a central cavity, resembling the structure of eukaryotic proteasomes.

The protein localises to the cytoplasm. The enzyme catalyses Hydrolysis of proteins to small peptides in the presence of ATP and magnesium. alpha-casein is the usual test substrate. In the absence of ATP, only oligopeptides shorter than five residues are hydrolyzed (such as succinyl-Leu-Tyr-|-NHMec, and Leu-Tyr-Leu-|-Tyr-Trp, in which cleavage of the -Tyr-|-Leu- and -Tyr-|-Trp bonds also occurs).. In terms of biological role, cleaves peptides in various proteins in a process that requires ATP hydrolysis. Has a chymotrypsin-like activity. Plays a major role in the degradation of misfolded proteins. The sequence is that of ATP-dependent Clp protease proteolytic subunit from Lacticaseibacillus paracasei (strain ATCC 334 / BCRC 17002 / CCUG 31169 / CIP 107868 / KCTC 3260 / NRRL B-441) (Lactobacillus paracasei).